A 221-amino-acid polypeptide reads, in one-letter code: Phosphoribosylformylglycinamidine synthase subunit PurQ (221 aa).

A Glutamine amidotransferase type-1 domain is found at 6–221 (VGVVVFPGSN…LFTLKSLILK (216 aa)). The active-site Nucleophile is the Cys-89. Residues His-197 and Glu-199 contribute to the active site.

Part of the FGAM synthase complex composed of 1 PurL, 1 PurQ and 2 PurS subunits.

The protein resides in the cytoplasm. It catalyses the reaction N(2)-formyl-N(1)-(5-phospho-beta-D-ribosyl)glycinamide + L-glutamine + ATP + H2O = 2-formamido-N(1)-(5-O-phospho-beta-D-ribosyl)acetamidine + L-glutamate + ADP + phosphate + H(+). It carries out the reaction L-glutamine + H2O = L-glutamate + NH4(+). It functions in the pathway purine metabolism; IMP biosynthesis via de novo pathway; 5-amino-1-(5-phospho-D-ribosyl)imidazole from N(2)-formyl-N(1)-(5-phospho-D-ribosyl)glycinamide: step 1/2. Functionally, part of the phosphoribosylformylglycinamidine synthase complex involved in the purines biosynthetic pathway. Catalyzes the ATP-dependent conversion of formylglycinamide ribonucleotide (FGAR) and glutamine to yield formylglycinamidine ribonucleotide (FGAM) and glutamate. The FGAM synthase complex is composed of three subunits. PurQ produces an ammonia molecule by converting glutamine to glutamate. PurL transfers the ammonia molecule to FGAR to form FGAM in an ATP-dependent manner. PurS interacts with PurQ and PurL and is thought to assist in the transfer of the ammonia molecule from PurQ to PurL. This Prochlorococcus marinus (strain MIT 9312) protein is Phosphoribosylformylglycinamidine synthase subunit PurQ.